Here is a 385-residue protein sequence, read N- to C-terminus: Muconate cycloisomerase 1-2 (385 aa).

Lys171 is an active-site residue. Mn(2+) is bound by residues Glu226 and Asp251.

It belongs to the mandelate racemase/muconate lactonizing enzyme family. In terms of assembly, homooctamer. It depends on Mn(2+) as a cofactor.

The catalysed reaction is (S)-muconolactone = cis,cis-muconate + H(+). It participates in aromatic compound metabolism; beta-ketoadipate pathway; 5-oxo-4,5-dihydro-2-furylacetate from catechol: step 2/3. Its function is as follows. Catalyzes a syn cycloisomerization. This is Muconate cycloisomerase 1-2 (catB2) from Acinetobacter lwoffii.